Consider the following 157-residue polypeptide: Small ribosomal subunit protein uS7 (157 aa).

It belongs to the universal ribosomal protein uS7 family. Part of the 30S ribosomal subunit. Contacts proteins S9 and S11.

One of the primary rRNA binding proteins, it binds directly to 16S rRNA where it nucleates assembly of the head domain of the 30S subunit. Is located at the subunit interface close to the decoding center, probably blocks exit of the E-site tRNA. This is Small ribosomal subunit protein uS7 from Polaromonas naphthalenivorans (strain CJ2).